The sequence spans 2204 residues: Non-reducing polyketide synthase CTB1 (2204 aa).

Residues 11-250 (AFGDQTYDCS…TRLPITAPYH (240 aa)) form an N-terminal acylcarrier protein transacylase domain (SAT) region. Residues 382–815 (KSPIAILAAS…GGNTCLVLED (434 aa)) form the Ketosynthase family 3 (KS3) domain. Residues C554, H689, and H734 each act as for beta-ketoacyl synthase activity in the active site. Residues 923 to 1224 (AFTGQGSAFE…QTFASINKDK (302 aa)) are malonyl-CoA:ACP transacylase (MAT) domain. Positions 1299–1619 (SSSIHKVITN…VPKRLMHYIV (321 aa)) are product template (PT) domain. The tract at residues 1303 to 1439 (HKVITNTITA…CKIRFGSLEK (137 aa)) is N-terminal hotdog fold. The 314-residue stretch at 1303 to 1616 (HKVITNTITA…LQGVPKRLMH (314 aa)) folds into the PKS/mFAS DH domain. The active-site Proton acceptor; for dehydratase activity is the H1336. Residues 1468-1616 (TYRFSKGMIY…LQGVPKRLMH (149 aa)) form a C-terminal hotdog fold region. D1528 serves as the catalytic Proton donor; for dehydratase activity. The tract at residues 1625–1674 (KASGPPTEKKGSSPPVEKKASAPVAPTRPAIQRKNASIPPPATQVTPQNK) is disordered. The segment covering 1631–1644 (TEKKGSSPPVEKKA) has biased composition (basic and acidic residues). Carrier domains follow at residues 1679–1756 (PSVS…TRLS) and 1783–1865 (DPSP…SGST). An O-(pantetheine 4'-phosphoryl)serine mark is found at S1716 and S1824. The span at 1864-1875 (STESFDSTTTKP) shows a compositional bias: polar residues. Residues 1864 to 1931 (STESFDSTTT…PPKGRIPPAW (68 aa)) form a disordered region. Low complexity predominate over residues 1880 to 1895 (ATPPLTDSSASSPPSS). Positions 1945-2195 (ILFLFPDGAG…SGAQMLVEHM (251 aa)) are thioesterase (TE) domain.

It depends on pantetheine 4'-phosphate as a cofactor.

It carries out the reaction 6 malonyl-CoA + acetyl-CoA + 6 H(+) = nor-toralactone + 6 CO2 + 7 CoA + 2 H2O. Its pathway is mycotoxin biosynthesis. In terms of biological role, polyketide synthase; part of the gene cluster that mediates the biosynthesis of cercosporin, a light-activated, non-host-selective toxin. The perylenequinone chromophore of cercosporin absorbs light energy to attain an electronically-activated triplet state and produces active oxygen species such as the hydroxyl radical, superoxide, hydrogen peroxide or singlet oxygen upon reaction with oxygen molecules. These reactive oxygen species cause damage to various cellular components including lipids, proteins and nucleic acids. The first step of cercosporin biosynthesis is performed by the polyketide synthase CTB1 which catalyzes the formation of nor-toralactone. The starter unit acyltransferase (SAT) domain of CTB1 initiates polyketide extension by the selective utilization of acetyl-CoA, which is elongated to the heptaketide in the beta-ketoacyl synthase (KS) domain by successive condensations with six malonyl units introduced by the malonyl acyltransferase (MAT) domain. The product template (PT) domain catalyzes C4-C9 and C2-C11 aldol cyclizations and dehydrations to a trihydroxynaphthalene, which is thought to be delivered to the thioesterase (TE) domain for product release. The bifunctional enzyme CTB3 then methylates nor-toralactone to toralactone before conducting an unusual oxidative aromatic ring opening. The O-methyltransferase CTB2 further methylates the nascent OH-6 of the CBT3 product, blocking further oxidation at this site before the reductase CTB6 reduces the 2-oxopropyl ketone at position C7, giving naphthalene. The FAD-dependent monooxygenase CTB5 in concert with the multicopper oxidase CTB12 are responsible for homodimerization of naphthalene with CTB7 installing the dioxepine moiety, finally producing cercosporin. The fasciclin domain-containing protein CTB11 might act with CTB5 and CTB12 whereas the roles of CTB9 and CTB10 have still to be elucidated. The sequence is that of Non-reducing polyketide synthase CTB1 from Cercospora beticola (Sugarbeet leaf spot fungus).